Reading from the N-terminus, the 368-residue chain is Peptide chain release factor 2 (368 aa).

Q250 bears the N5-methylglutamine mark.

This sequence belongs to the prokaryotic/mitochondrial release factor family. Post-translationally, methylated by PrmC. Methylation increases the termination efficiency of RF2.

Its subcellular location is the cytoplasm. Its function is as follows. Peptide chain release factor 2 directs the termination of translation in response to the peptide chain termination codons UGA and UAA. The chain is Peptide chain release factor 2 from Chlamydia abortus (strain DSM 27085 / S26/3) (Chlamydophila abortus).